The following is a 315-amino-acid chain: Solute carrier family 25 member 32 (315 aa).

Solcar repeat units follow at residues 20–109 (HVRY…IKSY), 118–209 (LEAT…LKLK), and 222–306 (LSTV…VSHF). 6 helical membrane passes run 26–43 (LIAG…LHPL), 89–106 (IWGA…YNAI), 123–143 (YLVS…PLWV), 186–203 (FVPG…FMAY), 227–243 (YISV…AATY), and 281–300 (GIAP…FVVY).

This sequence belongs to the mitochondrial carrier (TC 2.A.29) family. In terms of tissue distribution, ubiquitous.

It is found in the mitochondrion inner membrane. The enzyme catalyses FAD(in) = FAD(out). In terms of biological role, facilitates flavin adenine dinucleotide (FAD) translocation across the mitochondrial inner membrane into the mitochondrial matrix where it acts as a redox cofactor to assist flavoenzyme activities in fundamental metabolic processes including fatty acid beta-oxidation, amino acid and choline metabolism as well as mitochondrial electron transportation. In particular, provides FAD to DLD dehydrogenase of the glycine cleavage system, part of mitochondrial one-carbon metabolic pathway involved in neural tube closure in early embryogenesis. This is Solute carrier family 25 member 32 from Homo sapiens (Human).